Consider the following 476-residue polypeptide: uncharacterized protein (476 aa).

Residues 1–24 (MIRKSATGVIVALAVIWGGGTWYT) form the signal peptide.

This sequence to E.coli YdgA and H.influenzae HI_1236.

This is an uncharacterized protein from Escherichia coli (strain K12).